An 81-amino-acid chain; its full sequence is Short neurotoxin 2 (81 aa).

Residues 1-21 (MKTLLLTLVVVTIVCLDLGYT) form the signal peptide. 4 cysteine pairs are disulfide-bonded: cysteine 24–cysteine 43, cysteine 38–cysteine 60, cysteine 62–cysteine 73, and cysteine 74–cysteine 79.

The protein belongs to the three-finger toxin family. Short-chain subfamily. Type I alpha-neurotoxin sub-subfamily. Expressed by the venom gland.

The protein resides in the secreted. In terms of biological role, binds to muscle nicotinic acetylcholine receptor (nAChR) and inhibit acetylcholine from binding to the receptor, thereby impairing neuromuscular transmission. In Tropidechis carinatus (Australian rough-scaled snake), this protein is Short neurotoxin 2.